The sequence spans 128 residues: Aspartate 1-decarboxylase (128 aa).

Residue serine 25 is the Schiff-base intermediate with substrate; via pyruvic acid of the active site. Serine 25 carries the post-translational modification Pyruvic acid (Ser). Threonine 57 serves as a coordination point for substrate. Tyrosine 58 serves as the catalytic Proton donor. Substrate is bound at residue 73 to 75; sequence GSA.

It belongs to the PanD family. Heterooctamer of four alpha and four beta subunits. The cofactor is pyruvate. Is synthesized initially as an inactive proenzyme, which is activated by self-cleavage at a specific serine bond to produce a beta-subunit with a hydroxyl group at its C-terminus and an alpha-subunit with a pyruvoyl group at its N-terminus.

The protein resides in the cytoplasm. The enzyme catalyses L-aspartate + H(+) = beta-alanine + CO2. Its pathway is cofactor biosynthesis; (R)-pantothenate biosynthesis; beta-alanine from L-aspartate: step 1/1. In terms of biological role, catalyzes the pyruvoyl-dependent decarboxylation of aspartate to produce beta-alanine. The protein is Aspartate 1-decarboxylase of Burkholderia lata (strain ATCC 17760 / DSM 23089 / LMG 22485 / NCIMB 9086 / R18194 / 383).